Consider the following 225-residue polypeptide: Heptaprenylglyceryl phosphate synthase (225 aa).

K6 is a sn-glycerol 1-phosphate binding site. Mg(2+) contacts are provided by D8 and T34. Sn-glycerol 1-phosphate-binding positions include 153–158 (YVEYSG), G183, and 203–204 (GN).

Belongs to the GGGP/HepGP synthase family. Group I subfamily. As to quaternary structure, homodimer. The cofactor is Mg(2+).

The catalysed reaction is sn-glycerol 1-phosphate + all-trans-heptaprenyl diphosphate = 3-heptaprenyl-sn-glycero-1-phosphate + diphosphate. It participates in membrane lipid metabolism; glycerophospholipid metabolism. Its function is as follows. Prenyltransferase that catalyzes in vivo the transfer of the heptaprenyl moiety of heptaprenyl pyrophosphate (HepPP; 35 carbon atoms) to the C3 hydroxyl of sn-glycerol-1-phosphate (G1P), producing heptaprenylglyceryl phosphate (HepGP). This reaction is an ether-bond-formation step in the biosynthesis of archaea-type G1P-based membrane lipids found in Bacillales. This chain is Heptaprenylglyceryl phosphate synthase, found in Listeria monocytogenes serotype 4b (strain CLIP80459).